We begin with the raw amino-acid sequence, 298 residues long: Epimerase family protein SSP1921 (298 aa).

The protein belongs to the NAD(P)-dependent epimerase/dehydratase family. SDR39U1 subfamily.

This is Epimerase family protein SSP1921 from Staphylococcus saprophyticus subsp. saprophyticus (strain ATCC 15305 / DSM 20229 / NCIMB 8711 / NCTC 7292 / S-41).